A 196-amino-acid polypeptide reads, in one-letter code: Probable peptidyl-prolyl cis-trans isomerase (196 aa).

An N-terminal signal peptide occupies residues M1–A26. The 166-residue stretch at P29 to D194 folds into the PPIase cyclophilin-type domain.

This sequence belongs to the cyclophilin-type PPIase family.

It localises to the periplasm. It carries out the reaction [protein]-peptidylproline (omega=180) = [protein]-peptidylproline (omega=0). In terms of biological role, PPIases accelerate the folding of proteins. It catalyzes the cis-trans isomerization of proline imidic peptide bonds in oligopeptides. This Brucella abortus (strain 2308) protein is Probable peptidyl-prolyl cis-trans isomerase (ppi).